Reading from the N-terminus, the 885-residue chain is Envelope glycoprotein gp160 (885 aa).

The N-terminal stretch at 1–23 (MGCLGNQLLIALLLVSVLEICCV) is a signal peptide. Residues 24–700 (QYVTVFYGVP…TSWIRYIQYG (677 aa)) are Extracellular-facing. Asparagine 37 carries N-linked (GlcNAc...) asparagine; by host glycosylation. Cysteine 44 and cysteine 57 are oxidised to a cystine. N-linked (GlcNAc...) asparagine; by host glycans are attached at residues asparagine 70, asparagine 114, asparagine 148, asparagine 156, asparagine 173, asparagine 186, asparagine 201, asparagine 213, asparagine 245, asparagine 255, asparagine 279, asparagine 285, asparagine 296, asparagine 307, asparagine 317, asparagine 372, and asparagine 378. 5 cysteine pairs are disulfide-bonded: cysteine 101–cysteine 221, cysteine 108–cysteine 212, cysteine 113–cysteine 170, cysteine 234–cysteine 264, and cysteine 244–cysteine 256. Residues 113–169 (CNKTETDRWGLTGNAGTTTTAITTTATPSVAENVINESNPCIKNNSCAGLEQEPMIG) form a V1 region. The segment at 170-212 (CKFNMTGLNRDKKKEYNETWYSRDLICEQSANESESKCYMHHC) is V2. The segment at 312 to 344 (CRRPENKTVLPVTIMSGLVFHSQPINERPKQAW) is V3. Residues cysteine 312 and cysteine 345 are joined by a disulfide bond. Intrachain disulfides connect cysteine 396–cysteine 465 and cysteine 403–cysteine 438. Positions 403 to 438 (CKMNWFLNWVEDRDQKGGRWKQQNRKEQQKKNYVPC) are V4. N-linked (GlcNAc...) asparagine; by host glycans are attached at residues asparagine 466, asparagine 482, and asparagine 485. Positions 481-488 (SNETNITM) are V5. Residues 532–552 (GVFVLGFLGFLATAGSAMGAA) are fusion peptide. The segment at 595–611 (LQTRVTAIEKYLKDQAQ) is immunosuppression. Residues asparagine 631, asparagine 640, and asparagine 656 are each glycosylated (N-linked (GlcNAc...) asparagine; by host). Residues 640 to 672 (NMTWQEWERQVDFLEANITQLLEEAQIQQEKNM) adopt a coiled-coil conformation. Residues 677–698 (KLNSWDIFGNWFDLTSWIRYIQ) are MPER; binding to GalCer. A helical membrane pass occupies residues 701–721 (VLIVLGVIGLRIVIYVVQMLA). The Cytoplasmic segment spans residues 722–885 (RLRQGYRPVF…IRQGLELTLL (164 aa)). The YXXV motif; contains endocytosis signal signature appears at 727-730 (YRPV). The tract at residues 743 to 764 (IHKGQEPPTKEGEEGDGGDRGG) is disordered. The span at 745–764 (KGQEPPTKEGEEGDGGDRGG) shows a compositional bias: basic and acidic residues. Cysteine 793 is lipidated: S-palmitoyl cysteine; by host. The Di-leucine internalization motif motif lies at 884–885 (LL).

As to quaternary structure, the mature envelope protein (Env) consists of a homotrimer of non-covalently associated gp120-gp41 heterodimers. The resulting complex protrudes from the virus surface as a spike. Interacts with host CD4 and CCR5. Gp120 also interacts with the C-type lectins CD209/DC-SIGN and CLEC4M/DC-SIGNR (collectively referred to as DC-SIGN(R)). The mature envelope protein (Env) consists of a homotrimer of non-covalently associated gp120-gp41 heterodimers. The resulting complex protrudes from the virus surface as a spike. Specific enzymatic cleavages in vivo yield mature proteins. Envelope glycoproteins are synthesized as an inactive precursor that is heavily N-glycosylated and processed likely by host cell furin in the Golgi to yield the mature SU and TM proteins. The cleavage site between SU and TM requires the minimal sequence [KR]-X-[KR]-R. Post-translationally, palmitoylation of the transmembrane protein and of Env polyprotein (prior to its proteolytic cleavage) is essential for their association with host cell membrane lipid rafts. Palmitoylation is therefore required for envelope trafficking to classical lipid rafts, but not for viral replication.

It localises to the virion membrane. The protein localises to the host cell membrane. The protein resides in the host endosome membrane. Its function is as follows. The surface protein gp120 (SU) attaches the virus to the host lymphoid cell by binding to the primary receptor CD4. This interaction induces a structural rearrangement creating a high affinity binding site for a chemokine coreceptor like CCR5. This peculiar 2 stage receptor-interaction strategy allows gp120 to maintain the highly conserved coreceptor-binding site in a cryptic conformation, protected from neutralizing antibodies. These changes are transmitted to the transmembrane protein gp41 and are thought to activate its fusogenic potential by unmasking its fusion peptide. Functionally, surface protein gp120 (SU) may target the virus to gut-associated lymphoid tissue (GALT) by binding host ITGA4/ITGB7 (alpha-4/beta-7 integrins), a complex that mediates T-cell migration to the GALT. Interaction between gp120 and ITGA4/ITGB7 would allow the virus to enter GALT early in the infection, infecting and killing most of GALT's resting CD4+ T-cells. This T-cell depletion is believed to be the major insult to the host immune system leading to AIDS. The surface protein gp120 is a ligand for CD209/DC-SIGN and CLEC4M/DC-SIGNR, which are respectively found on dendritic cells (DCs), and on endothelial cells of liver sinusoids and lymph node sinuses. These interactions allow capture of viral particles at mucosal surfaces by these cells and subsequent transmission to permissive cells. DCs are professional antigen presenting cells, critical for host immunity by inducing specific immune responses against a broad variety of pathogens. They act as sentinels in various tissues where they take up antigen, process it, and present it to T-cells following migration to lymphoid organs. SIV subverts the migration properties of dendritic cells to gain access to CD4+ T-cells in lymph nodes. Virus transmission to permissive T-cells occurs either in trans (without DCs infection, through viral capture and transmission), or in cis (following DCs productive infection, through the usual CD4-gp120 interaction), thereby inducing a robust infection. In trans infection, bound virions remain infectious over days and it is proposed that they are not degraded, but protected in non-lysosomal acidic organelles within the DCs close to the cell membrane thus contributing to the viral infectious potential during DCs' migration from the periphery to the lymphoid tissues. On arrival at lymphoid tissues, intact virions recycle back to DCs' cell surface allowing virus transmission to CD4+ T-cells. Virion capture also seems to lead to MHC-II-restricted viral antigen presentation, and probably to the activation of SIV-specific CD4+ cells. In terms of biological role, the transmembrane protein gp41 (TM) acts as a class I viral fusion protein. Under the current model, the protein has at least 3 conformational states: pre-fusion native state, pre-hairpin intermediate state, and post-fusion hairpin state. During fusion of viral and target intracellular membranes, the coiled coil regions (heptad repeats) assume a trimer-of-hairpins structure, positioning the fusion peptide in close proximity to the C-terminal region of the ectodomain. The formation of this structure appears to drive apposition and subsequent fusion of viral and target cell membranes. Complete fusion occurs in host cell endosomes. The virus undergoes clathrin-dependent internalization long before endosomal fusion, thus minimizing the surface exposure of conserved viral epitopes during fusion and reducing the efficacy of inhibitors targeting these epitopes. Membranes fusion leads to delivery of the nucleocapsid into the cytoplasm. Its function is as follows. The envelope glycoprotein gp160 precursor down-modulates cell surface CD4 antigen by interacting with it in the endoplasmic reticulum and blocking its transport to the cell surface. Functionally, the gp120-gp41 heterodimer allows rapid transcytosis of the virus through CD4 negative cells such as simple epithelial monolayers of the intestinal, rectal and endocervical epithelial barriers. Both gp120 and gp41 specifically recognize glycosphingolipids galactosyl-ceramide (GalCer) or 3' sulfo-galactosyl-ceramide (GalS) present in the lipid rafts structures of epithelial cells. Binding to these alternative receptors allows the rapid transcytosis of the virus through the epithelial cells. This transcytotic vesicle-mediated transport of virions from the apical side to the basolateral side of the epithelial cells does not involve infection of the cells themselves. This Cercopithecidae (Old World monkeys) protein is Envelope glycoprotein gp160 (env).